A 463-amino-acid polypeptide reads, in one-letter code: Asparagine--tRNA ligase (463 aa).

It belongs to the class-II aminoacyl-tRNA synthetase family. As to quaternary structure, homodimer.

It localises to the cytoplasm. It catalyses the reaction tRNA(Asn) + L-asparagine + ATP = L-asparaginyl-tRNA(Asn) + AMP + diphosphate + H(+). This is Asparagine--tRNA ligase from Desulfitobacterium hafniense (strain Y51).